Here is a 283-residue protein sequence, read N- to C-terminus: 4-diphosphocytidyl-2-C-methyl-D-erythritol kinase (283 aa).

Lys-10 is an active-site residue. 99–109 provides a ligand contact to ATP; it reads PMGGGLGGGSS. Asp-141 is a catalytic residue.

The protein belongs to the GHMP kinase family. IspE subfamily. In terms of assembly, homodimer.

It catalyses the reaction 4-CDP-2-C-methyl-D-erythritol + ATP = 4-CDP-2-C-methyl-D-erythritol 2-phosphate + ADP + H(+). It functions in the pathway isoprenoid biosynthesis; isopentenyl diphosphate biosynthesis via DXP pathway; isopentenyl diphosphate from 1-deoxy-D-xylulose 5-phosphate: step 3/6. Its function is as follows. Catalyzes the phosphorylation of the position 2 hydroxy group of 4-diphosphocytidyl-2C-methyl-D-erythritol. The protein is 4-diphosphocytidyl-2-C-methyl-D-erythritol kinase of Salmonella paratyphi C (strain RKS4594).